Reading from the N-terminus, the 101-residue chain is Small ribosomal subunit protein uS14 (101 aa).

It belongs to the universal ribosomal protein uS14 family. Part of the 30S ribosomal subunit. Contacts proteins S3 and S10.

In terms of biological role, binds 16S rRNA, required for the assembly of 30S particles and may also be responsible for determining the conformation of the 16S rRNA at the A site. In Pseudomonas putida (strain W619), this protein is Small ribosomal subunit protein uS14.